The chain runs to 211 residues: Interleukin-6 (211 aa).

Positions 1-24 (MKFLSARDFHPVAFLGLMLVTTTA) are cleaved as a signal peptide. 2 disulfides stabilise this stretch: Cys-70/Cys-76 and Cys-99/Cys-109.

Belongs to the IL-6 superfamily. In terms of assembly, component of a hexamer of two molecules each of IL6, IL6R and IL6ST; first binds to IL6R to associate with the signaling subunit IL6ST. Interacts with IL6R (via the N-terminal ectodomain); this interaction may be affected by IL6R-binding with SORL1, hence decreasing IL6 cis signaling. Interacts with SORL1 (via the N-terminal ectodomain); this interaction leads to IL6 internalization and lysosomal degradation. May form a trimeric complex with the soluble SORL1 ectodomain and soluble IL6R receptor; this interaction might stabilize circulating IL6, hence promoting IL6 trans signaling. N- and O-glycosylated. As to expression, expressed by dendritic cells and macrophages. Expressed by activated follicular B cells. Abundantly expressed in the central nervous system (CNS), particularly the hypothalamic region.

It localises to the secreted. Its function is as follows. Cytokine with a wide variety of biological functions in immunity, tissue regeneration, and metabolism. Binds to IL6R, then the complex associates to the signaling subunit IL6ST/gp130 to trigger the intracellular IL6-signaling pathway. The interaction with the membrane-bound IL6R and IL6ST stimulates 'classic signaling', whereas the binding of IL6 and soluble IL6R to IL6ST stimulates 'trans-signaling'. Alternatively, 'cluster signaling' occurs when membrane-bound IL6:IL6R complexes on transmitter cells activate IL6ST receptors on neighboring receiver cells. Functionally, IL6 is a potent inducer of the acute phase response. Rapid production of IL6 contributes to host defense during infection and tissue injury, but excessive IL6 synthesis is involved in disease pathology. In the innate immune response, is synthesized by myeloid cells, such as macrophages and dendritic cells, upon recognition of pathogens through toll-like receptors (TLRs) at the site of infection or tissue injury. In the adaptive immune response, is required for the differentiation of B-cells into immunoglolin-secreting cells. Plays a major role in the differentiation of CD4(+) T cell subsets. Essential factor for the development of T follicular helper (Tfh) cells that are required for the induction of germinal-center formation. Together with IL21, controls the early generation of Tfh cells and are critical for an effective antibody response to acute viral infection. Required to drive naive CD4(+) T cells to the Th17 lineage, through 'cluster signaling' by dendritic cells. Also required for proliferation of myeloma cells and the survival of plasmablast cells. Acts as an essential factor in bone homeostasis and on vessels directly or indirectly by induction of VEGF, resulting in increased angiogenesis activity and vascular permeability. Induces, through 'trans-signaling' and synergistically with IL1B and TNF, the production of VEGF. Involved in metabolic controls, is discharged into the bloodstream after muscle contraction increasing lipolysis and improving insulin resistance. 'Trans-signaling' in central nervous system regulates energy and glucose homeostasis. Mediates, through GLP-1, crosstalk between insulin-sensitive tissues, intestinal L cells and pancreatic islets to adapt to changes in insulin demand. Also acts as a myokine. Plays a protective role during liver injury, being required for maintenance of tissue regeneration. Also has a pivotal role in iron metabolism by regulating HAMP/hepcidin expression upon inflammation or bacterial infection. Through activation of IL6ST-YAP-NOTCH pathway, induces inflammation-induced epithelial regeneration. In Mus musculus (Mouse), this protein is Interleukin-6.